Here is a 400-residue protein sequence, read N- to C-terminus: Nicotinate phosphoribosyltransferase (400 aa).

At His220 the chain carries Phosphohistidine; by autocatalysis.

The protein belongs to the NAPRTase family. Post-translationally, transiently phosphorylated on a His residue during the reaction cycle. Phosphorylation strongly increases the affinity for substrates and increases the rate of nicotinate D-ribonucleotide production. Dephosphorylation regenerates the low-affinity form of the enzyme, leading to product release.

The enzyme catalyses nicotinate + 5-phospho-alpha-D-ribose 1-diphosphate + ATP + H2O = nicotinate beta-D-ribonucleotide + ADP + phosphate + diphosphate. It participates in cofactor biosynthesis; NAD(+) biosynthesis; nicotinate D-ribonucleotide from nicotinate: step 1/1. Its function is as follows. Catalyzes the synthesis of beta-nicotinate D-ribonucleotide from nicotinate and 5-phospho-D-ribose 1-phosphate at the expense of ATP. The chain is Nicotinate phosphoribosyltransferase from Escherichia coli (strain K12 / MC4100 / BW2952).